Reading from the N-terminus, the 445-residue chain is ATP synthase subunit b-delta (445 aa).

An ATP synthase subunit b region spans residues 1–168 (MSIFIGQLIG…PSSVVIDTAA (168 aa)). Residues 3–23 (IFIGQLIGFAVIAFIIVKWVV) traverse the membrane as a helical segment. The interval 169–445 (TSRLRAASRQ…LAAAQTGLPD (277 aa)) is ATP synthase subunit delta.

It in the N-terminal section; belongs to the ATPase B chain family. This sequence in the C-terminal section; belongs to the ATPase delta chain family. In terms of assembly, F-type ATPases have 2 components, F(1) - the catalytic core - and F(0) - the membrane proton channel. F(1) has five subunits: alpha(3), beta(3), gamma(1), delta(1), epsilon(1). F(0) has three main subunits: a(1), b(2) and c(10-14). The alpha and beta chains form an alternating ring which encloses part of the gamma chain. F(1) is attached to F(0) by a central stalk formed by the gamma and epsilon chains, while a peripheral stalk is formed by the delta and b chains.

It localises to the cell membrane. F(1)F(0) ATP synthase produces ATP from ADP in the presence of a proton or sodium gradient. F-type ATPases consist of two structural domains, F(1) containing the extramembraneous catalytic core and F(0) containing the membrane proton channel, linked together by a central stalk and a peripheral stalk. During catalysis, ATP synthesis in the catalytic domain of F(1) is coupled via a rotary mechanism of the central stalk subunits to proton translocation. Its function is as follows. This fusion protein includes a component of the F(0) channel (subunit b) and of the F(1) subunit (subunit delta). Two copies of subunit b and one of delta together form the peripheral 'stator' stalk which links F(1) to F(0). This Mycolicibacterium smegmatis (strain ATCC 700084 / mc(2)155) (Mycobacterium smegmatis) protein is ATP synthase subunit b-delta (atpFH).